A 519-amino-acid chain; its full sequence is Histidine--tRNA ligase (519 aa).

Belongs to the class-II aminoacyl-tRNA synthetase family. As to quaternary structure, homodimer.

It is found in the cytoplasm. The catalysed reaction is tRNA(His) + L-histidine + ATP = L-histidyl-tRNA(His) + AMP + diphosphate + H(+). The sequence is that of Histidine--tRNA ligase from Roseobacter denitrificans (strain ATCC 33942 / OCh 114) (Erythrobacter sp. (strain OCh 114)).